A 148-amino-acid chain; its full sequence is Urease accessory protein UreE (148 aa).

Belongs to the UreE family.

It is found in the cytoplasm. Its function is as follows. Involved in urease metallocenter assembly. Binds nickel. Probably functions as a nickel donor during metallocenter assembly. The chain is Urease accessory protein UreE from Halalkalibacterium halodurans (strain ATCC BAA-125 / DSM 18197 / FERM 7344 / JCM 9153 / C-125) (Bacillus halodurans).